The primary structure comprises 807 residues: Glycerol-3-phosphate acyltransferase (807 aa).

Residues 305-310 (CHRSHM) carry the HXXXXD motif motif.

Belongs to the GPAT/DAPAT family.

Its subcellular location is the cell inner membrane. It catalyses the reaction sn-glycerol 3-phosphate + an acyl-CoA = a 1-acyl-sn-glycero-3-phosphate + CoA. The protein operates within phospholipid metabolism; CDP-diacylglycerol biosynthesis; CDP-diacylglycerol from sn-glycerol 3-phosphate: step 1/3. The sequence is that of Glycerol-3-phosphate acyltransferase from Aliivibrio salmonicida (strain LFI1238) (Vibrio salmonicida (strain LFI1238)).